Here is a 174-residue protein sequence, read N- to C-terminus: ATP-dependent protease subunit HslV (174 aa).

Thr-2 is a catalytic residue. Gly-157, Cys-160, and Thr-163 together coordinate Na(+).

The protein belongs to the peptidase T1B family. HslV subfamily. A double ring-shaped homohexamer of HslV is capped on each side by a ring-shaped HslU homohexamer. The assembly of the HslU/HslV complex is dependent on binding of ATP.

It is found in the cytoplasm. The enzyme catalyses ATP-dependent cleavage of peptide bonds with broad specificity.. Its activity is regulated as follows. Allosterically activated by HslU binding. Its function is as follows. Protease subunit of a proteasome-like degradation complex believed to be a general protein degrading machinery. The polypeptide is ATP-dependent protease subunit HslV (Shewanella loihica (strain ATCC BAA-1088 / PV-4)).